A 357-amino-acid polypeptide reads, in one-letter code: Cyclic AMP-responsive element-binding protein 5 (357 aa).

A disordered region spans residues 114 to 239 (RQDQTPHHHL…FLERNRAAAT (126 aa)). Basic residues-rich tracts occupy residues 120-129 (HHHLHSHPHQ) and 138-175 (PYPH…HPAH). Positions 186 to 195 (TGNQAQVSPA) are enriched in polar residues. Positions 196–206 (TQQMQPTQTIQ) are enriched in low complexity. A compositionally biased stretch (basic and acidic residues) spans 218-235 (VVDEDPDERRRKFLERNR). The bZIP domain maps to 224–287 (DERRRKFLER…AQLKQLLLTH (64 aa)). The tract at residues 226–246 (RRRKFLERNRAAATRCRQKRK) is basic motif. A leucine-zipper region spans residues 252–280 (LEKKAEELTQTNMQLQNEVSMLKNEVAQL). Residues 298–318 (ESQGYLSPESSPPASPVPACS) form a disordered region.

The protein belongs to the bZIP family. As to quaternary structure, binds DNA as a homodimer or as a heterodimer with JUN or ATF2/CREBP1.

It localises to the nucleus. Functionally, binds to the cAMP response element and activates transcription. The polypeptide is Cyclic AMP-responsive element-binding protein 5 (Creb5) (Mus musculus (Mouse)).